A 306-amino-acid chain; its full sequence is Pyridoxal 5'-phosphate synthase subunit PdxS (306 aa).

Aspartate 36 is a D-ribose 5-phosphate binding site. Residue lysine 93 is the Schiff-base intermediate with D-ribose 5-phosphate of the active site. D-ribose 5-phosphate is bound at residue glycine 165. Arginine 177 is a D-glyceraldehyde 3-phosphate binding site. Residues glycine 226 and glycine 247–serine 248 each bind D-ribose 5-phosphate.

It belongs to the PdxS/SNZ family. As to quaternary structure, in the presence of PdxT, forms a dodecamer of heterodimers.

It catalyses the reaction aldehydo-D-ribose 5-phosphate + D-glyceraldehyde 3-phosphate + L-glutamine = pyridoxal 5'-phosphate + L-glutamate + phosphate + 3 H2O + H(+). It participates in cofactor biosynthesis; pyridoxal 5'-phosphate biosynthesis. Catalyzes the formation of pyridoxal 5'-phosphate from ribose 5-phosphate (RBP), glyceraldehyde 3-phosphate (G3P) and ammonia. The ammonia is provided by the PdxT subunit. Can also use ribulose 5-phosphate and dihydroxyacetone phosphate as substrates, resulting from enzyme-catalyzed isomerization of RBP and G3P, respectively. The protein is Pyridoxal 5'-phosphate synthase subunit PdxS of Nocardia farcinica (strain IFM 10152).